A 421-amino-acid polypeptide reads, in one-letter code: Gamma-glutamyl phosphate reductase (421 aa).

The protein belongs to the gamma-glutamyl phosphate reductase family.

It is found in the cytoplasm. The catalysed reaction is L-glutamate 5-semialdehyde + phosphate + NADP(+) = L-glutamyl 5-phosphate + NADPH + H(+). It functions in the pathway amino-acid biosynthesis; L-proline biosynthesis; L-glutamate 5-semialdehyde from L-glutamate: step 2/2. Its function is as follows. Catalyzes the NADPH-dependent reduction of L-glutamate 5-phosphate into L-glutamate 5-semialdehyde and phosphate. The product spontaneously undergoes cyclization to form 1-pyrroline-5-carboxylate. This Acinetobacter baylyi (strain ATCC 33305 / BD413 / ADP1) protein is Gamma-glutamyl phosphate reductase.